Consider the following 245-residue polypeptide: Phycocyanobilin:ferredoxin oxidoreductase (245 aa).

The protein belongs to the HY2 family.

It catalyses the reaction (2R,3Z)-phycocyanobilin + 4 oxidized [2Fe-2S]-[ferredoxin] = biliverdin IXalpha + 4 reduced [2Fe-2S]-[ferredoxin] + 4 H(+). In terms of biological role, catalyzes the four-electron reduction of biliverdin IX-alpha (2-electron reduction at both the A and D rings); the reaction proceeds via an isolatable 2-electron intermediate, 181,182-dihydrobiliverdin. The sequence is that of Phycocyanobilin:ferredoxin oxidoreductase from Trichormus variabilis (strain ATCC 29413 / PCC 7937) (Anabaena variabilis).